The chain runs to 539 residues: Tripartite motif-containing protein 26 (539 aa).

The RING-type zinc finger occupies 16-57 (CSICLDYLRDPVTIDCGHVFCRSCTTDVRPISGSRPVCPLCK). The B box-type zinc finger occupies 97-138 (QDAKLCERHREKLHYYCEDDGKLLCVMCRESREHRPHTAVLM). 4 residues coordinate Zn(2+): C102, H105, C124, and H130. The stretch at 188-227 (IVAEFEQGHQFLREREEHLLEQLAKLEQELTEGREKFKSR) forms a coiled coil. The B30.2/SPRY domain maps to 295–539 (RGLREFQGKL…WPGTRLLLRP (245 aa)). The tract at residues 376-437 (REGWSEDEEE…EEEEEVLESC (62 aa)) is disordered. Acidic residues predominate over residues 380–434 (SEDEEEGDEEEEGEEEEEEEEAGYGDGYDDWETDEDEESLGDEEEEEEEEEEEVL).

This sequence belongs to the TRIM/RBCC family. As to quaternary structure, interacts with TBK1; this interaction bridges together TBK1 and NEMO in order to activate TBK1. Interacts with INCA1. Autoubiquitinates upon viral infection. In turn, autoubiquitinated TRIM26 recruits NEMO and bridges TBK1-NEMO interaction.

It is found in the cytoplasm. Its subcellular location is the nucleus. The catalysed reaction is S-ubiquitinyl-[E2 ubiquitin-conjugating enzyme]-L-cysteine + [acceptor protein]-L-lysine = [E2 ubiquitin-conjugating enzyme]-L-cysteine + N(6)-ubiquitinyl-[acceptor protein]-L-lysine.. Functionally, E3 ubiquitin-protein ligase which regulates the IFN-beta production and antiviral response downstream of various DNA-encoded pattern-recognition receptors (PRRs). Also plays a central role in determining the response to different forms of oxidative stress by controlling levels of DNA glycosylases NEIL1, NEIL3 and NTH1 that are involved in repair of damaged DNA. Promotes nuclear IRF3 ubiquitination and proteasomal degradation. Bridges together TBK1 and NEMO during the innate response to viral infection leading to the activation of TBK1. Positively regulates LPS-mediated inflammatory innate immune response by catalyzing the 'Lys-11'-linked polyubiquitination of TAB1 to enhance its activation and subsequent NF-kappa-B and MAPK signaling. In a manner independent of its catalytic activity, inhibits WWP2, a SOX2-directed E3 ubiquitin ligase, and thus protects SOX2 from polyubiquitination and proteasomal degradation. Ubiquitinates the histone acetyltransferase protein complex component PHF20 and thereby triggers its degradation in the nucleus after its recruitment by the histone demethylase KDM6B, serving as a scaffold protein. Upon induction by TGF-beta, ubiquitinates the TFIID component TAF7 for proteasomal degradation. Induces ferroptosis by ubiquitinating SLC7A11, a critical protein for lipid reactive oxygen species (ROS) scavenging. In Pan troglodytes (Chimpanzee), this protein is Tripartite motif-containing protein 26 (TRIM26).